Consider the following 274-residue polypeptide: WIMGHMVNAIEQVGEFLNLGADAIEFDFDFDKDGIAQVTHHGIPCDCGRKCTKKAIFTEYLDNIRQVTTPDDPKFREQLVLLALDLKLQRISSAKAYRAGEDVAKKLLDHYWQRGNSRARAYILLNIPLVEDYEFIRAFKDTLKNEGYESYNDKVGINFSGNEDLDKIRDVLEILGIHKQVWQADGITSCFARGTERLKEALEKRDTPGYNYINKVYAWTLVRKSIMRRSLRLGVDGVMSNNPDRVIKALKEKEFADKFRLATYNDNPWEKFRG.

The active site involves H5. Mg(2+)-binding residues include E25 and D27. The Nucleophile role is filled by H41. 2 disulfide bridges follow: C45-C51 and C47-C190. D85 is a binding site for Mg(2+).

Belongs to the arthropod phospholipase D family. Class II subfamily. It depends on Mg(2+) as a cofactor. Expressed by the venom gland.

It is found in the secreted. The enzyme catalyses an N-(acyl)-sphingosylphosphocholine = an N-(acyl)-sphingosyl-1,3-cyclic phosphate + choline. It carries out the reaction an N-(acyl)-sphingosylphosphoethanolamine = an N-(acyl)-sphingosyl-1,3-cyclic phosphate + ethanolamine. It catalyses the reaction a 1-acyl-sn-glycero-3-phosphocholine = a 1-acyl-sn-glycero-2,3-cyclic phosphate + choline. The catalysed reaction is a 1-acyl-sn-glycero-3-phosphoethanolamine = a 1-acyl-sn-glycero-2,3-cyclic phosphate + ethanolamine. In terms of biological role, dermonecrotic toxins cleave the phosphodiester linkage between the phosphate and headgroup of certain phospholipids (sphingolipid and lysolipid substrates), forming an alcohol (often choline) and a cyclic phosphate. This toxin acts on sphingomyelin (SM). It may also act on ceramide phosphoethanolamine (CPE), lysophosphatidylcholine (LPC) and lysophosphatidylethanolamine (LPE), but not on lysophosphatidylserine (LPS), and lysophosphatidylglycerol (LPG). It acts by transphosphatidylation, releasing exclusively cyclic phosphate products as second products. Induces dermonecrosis, hemolysis, increased vascular permeability, edema, inflammatory response, and platelet aggregation. This chain is Dermonecrotic toxin SdSicTox-betaIIB1bv, found in Sicarius cf. damarensis (strain GJB-2008) (Six-eyed sand spider).